A 238-amino-acid chain; its full sequence is Ubiquinone biosynthesis O-methyltransferase (238 aa).

S-adenosyl-L-methionine contacts are provided by R38, G57, D78, and L124.

This sequence belongs to the methyltransferase superfamily. UbiG/COQ3 family.

The enzyme catalyses a 3-demethylubiquinol + S-adenosyl-L-methionine = a ubiquinol + S-adenosyl-L-homocysteine + H(+). The catalysed reaction is a 3-(all-trans-polyprenyl)benzene-1,2-diol + S-adenosyl-L-methionine = a 2-methoxy-6-(all-trans-polyprenyl)phenol + S-adenosyl-L-homocysteine + H(+). It participates in cofactor biosynthesis; ubiquinone biosynthesis. Its function is as follows. O-methyltransferase that catalyzes the 2 O-methylation steps in the ubiquinone biosynthetic pathway. The protein is Ubiquinone biosynthesis O-methyltransferase of Marinobacter nauticus (strain ATCC 700491 / DSM 11845 / VT8) (Marinobacter aquaeolei).